The primary structure comprises 369 residues: Peptide chain release factor 1 (369 aa).

An N5-methylglutamine modification is found at glutamine 234.

This sequence belongs to the prokaryotic/mitochondrial release factor family. Methylated by PrmC. Methylation increases the termination efficiency of RF1.

The protein resides in the cytoplasm. Its function is as follows. Peptide chain release factor 1 directs the termination of translation in response to the peptide chain termination codons UAG and UAA. This Kocuria rhizophila (strain ATCC 9341 / DSM 348 / NBRC 103217 / DC2201) protein is Peptide chain release factor 1.